Consider the following 245-residue polypeptide: 1-(5-phosphoribosyl)-5-[(5-phosphoribosylamino)methylideneamino] imidazole-4-carboxamide isomerase (245 aa).

Asp-7 serves as the catalytic Proton acceptor. The active-site Proton donor is the Asp-129.

Belongs to the HisA/HisF family.

The protein resides in the cytoplasm. It catalyses the reaction 1-(5-phospho-beta-D-ribosyl)-5-[(5-phospho-beta-D-ribosylamino)methylideneamino]imidazole-4-carboxamide = 5-[(5-phospho-1-deoxy-D-ribulos-1-ylimino)methylamino]-1-(5-phospho-beta-D-ribosyl)imidazole-4-carboxamide. It functions in the pathway amino-acid biosynthesis; L-histidine biosynthesis; L-histidine from 5-phospho-alpha-D-ribose 1-diphosphate: step 4/9. This is 1-(5-phosphoribosyl)-5-[(5-phosphoribosylamino)methylideneamino] imidazole-4-carboxamide isomerase from Salmonella heidelberg (strain SL476).